An 85-amino-acid chain; its full sequence is UPF0434 protein HNE_3545 (85 aa).

The protein belongs to the UPF0434 family.

This Hyphomonas neptunium (strain ATCC 15444) protein is UPF0434 protein HNE_3545.